Reading from the N-terminus, the 161-residue chain is Protein translocase subunit SecE (161 aa).

Over residues M1 to V12 the composition is skewed to acidic residues. Residues M1–K80 form a disordered region. Residues V133–T153 form a helical membrane-spanning segment.

This sequence belongs to the SecE/SEC61-gamma family. Component of the Sec protein translocase complex. Heterotrimer consisting of SecY, SecE and SecG subunits. The heterotrimers can form oligomers, although 1 heterotrimer is thought to be able to translocate proteins. Interacts with the ribosome. Interacts with SecDF, and other proteins may be involved. Interacts with SecA.

Its subcellular location is the cell membrane. Its function is as follows. Essential subunit of the Sec protein translocation channel SecYEG. Clamps together the 2 halves of SecY. May contact the channel plug during translocation. The polypeptide is Protein translocase subunit SecE (Mycobacterium bovis (strain ATCC BAA-935 / AF2122/97)).